The primary structure comprises 3573 residues: Zinc finger homeobox protein 4 (3573 aa).

Residues 1–28 are compositionally biased toward polar residues; it reads METCDSPTISRQENGQSTSKLCGTTQLD. Disordered stretches follow at residues 1–54, 425–479, and 522–606; these read METC…LRTD, LSHS…DTYS, and TSSS…GSPG. Basic and acidic residues-rich tracts occupy residues 39-54 and 434-452; these read EPDR…LRTD and KLSE…KETN. Over residues 468–479 the composition is skewed to acidic residues; that stretch reads EPVEEEDEDTYS. The span at 585–599 shows a compositional bias: polar residues; that stretch reads SVTPHQHSFTPSTPS. C2H2-type zinc fingers lie at residues 609–632, 640–663, and 695–719; these read IECP…TMMH, LKCP…KEKH, and FRCE…SDKH. The C2H2-type 4; degenerate zinc-finger motif lies at 763 to 785; that stretch reads WRCEVCDYETNVARNLRIHMTSE. 3 C2H2-type zinc fingers span residues 913–937, 969–991, and 1017–1041; these read YQCK…TDKH, LKCN…TTNH, and YYCA…SVKH. Positions 1096–1132 are disordered; sequence GEDTEGSAKSTSVAIGDDKDSSERDNTEAKKSSKDSV. The segment covering 1111–1129 has biased composition (basic and acidic residues); sequence GDDKDSSERDNTEAKKSSK. 2 consecutive C2H2-type zinc fingers follow at residues 1168 to 1191 and 1197 to 1220; these read YQCP…LSQH and ICCP…THLH. A disordered region spans residues 1250–1340; it reads AASEKSERDT…EQQKKQQLSV (91 aa). Positions 1277 to 1306 are enriched in basic and acidic residues; the sequence is VDEKSTPGTDESKPGMEIKSEEQKPPKESA. Residues 1322 to 1340 are compositionally biased toward polar residues; the sequence is TDSMPDQLNEQQKKQQLSV. 2 consecutive C2H2-type zinc fingers follow at residues 1348 to 1370 and 1376 to 1399; these read YRCN…SQYH and TMCS…EAGH. The interval 1442-1476 is disordered; the sequence is YEMEQEGKASPVGSDSSSIPDDMGSEPKRTLPFRK. 2 consecutive C2H2-type zinc fingers follow at residues 1492–1518 and 1544–1568; these read YKCT…SHLH and YKCS…SVLH. Disordered stretches follow at residues 1577–1596 and 1795–1843; these read LEPS…VNSP and YKES…IASG. The segment covering 1580–1596 has biased composition (low complexity); it reads SGNISSGNSVAGNVNSP. Residues 1795-1830 are compositionally biased toward basic and acidic residues; the sequence is YKESEEISEKQEKPKQEFTNESEGLKENKDMKKPKS. The segment at 1886 to 1909 adopts a C2H2-type 14 zinc-finger fold; sequence LECGTCSKLFSNILILKSHQEHVH. The segment at 1933–2013 is disordered; sequence YPISPSSPET…PSAPPQVQLP (81 aa). Pro residues-rich tracts occupy residues 1940-1962 and 1980-2007; these read PETP…PTPS and LQAP…PSAP. 2 consecutive DNA-binding regions (homeobox) follow at residues 2072 to 2131 and 2169 to 2228; these read FKRP…RQRN and KRSS…RKSY. A C2H2-type 15; degenerate zinc finger spans residues 2255–2279; that stretch reads YQCKKCSVVFPRIFDLITHQKKQCY. 2 disordered regions span residues 2278 to 2300 and 2318 to 2426; these read CYKD…DASD and SLAV…TPLQ. Acidic residues predominate over residues 2281–2297; the sequence is DEDDDAQDESQTEDSMD. The segment covering 2318-2334 has biased composition (low complexity); that stretch reads SLAVTAASSGSGSSTPL. Residues 2340–2357 show a composition bias toward basic and acidic residues; that stretch reads PEPEKASPKSESTEKPKP. Composition is skewed to low complexity over residues 2360-2373 and 2382-2413; these read TISK…QSSK and PSDP…TTPV. Residues 2436–2458 form a C2H2-type 16 zinc finger; the sequence is YQCDQCTVAFPTLELWQEHQHMH. Positions 2499-2509 are enriched in polar residues; that stretch reads LAQMPPQTGSS. The disordered stretch occupies residues 2499 to 2553; that stretch reads LAQMPPQTGSSHAAHPATVSGSMKRKLDDKEDNNCSEKEGGNSGEDQHRDKRLRT. Over residues 2523–2547 the composition is skewed to basic and acidic residues; it reads RKLDDKEDNNCSEKEGGNSGEDQHR. Residues 2548–2607 constitute a DNA-binding region (homeobox 3); it reads DKRLRTTITPEQLEILYEKYLLDSNPTRKMLDHIAREVGLKKRVVQVWFQNTRARERKGQ. The C2H2-type 17 zinc-finger motif lies at 2618 to 2641; sequence KRCPFCRALFKAKSALESHIRSRH. Disordered stretches follow at residues 2704–2788 and 2820–2875; these read EMSP…PKPL and FSEK…PGHK. Polar residues-rich tracts occupy residues 2709-2718 and 2746-2773; these read NLLSPSSFKA and TSSI…TGSS. The segment covering 2820–2829 has biased composition (basic and acidic residues); sequence FSEKDGDHDQ. Positions 2874 to 2933 form a DNA-binding region, homeobox 4; that stretch reads HKRFRTQMSNLQLKVLKACFSDYRTPTMQECEMLGNEIGLPKRVVQVWFQNARAKEKKFK. The segment at 2952–2976 adopts a C2H2-type 18; degenerate zinc-finger fold; sequence PECSLCGVKYSARLSIRDHIFSKQH. Disordered stretches follow at residues 3060–3174 and 3287–3343; these read PSSL…KHLK and LQKQ…LDSK. Over residues 3084-3104 the composition is skewed to low complexity; sequence PTSATSSPALSLSSAPSKPLL. Over residues 3105 to 3129 the composition is skewed to pro residues; the sequence is QTPPPPPPPPPPPPPPPPPPPPPPS. Positions 3159–3174 are enriched in basic and acidic residues; it reads IKEEELEANKPEKHLK. Positions 3271–3316 form a coiled coil; that stretch reads ALLQQYQQYQQNLQDSLQKQQKQQQEQQQKQVQAKSSKAENDQQQN. Over residues 3287 to 3305 the composition is skewed to low complexity; sequence LQKQQKQQQEQQQKQVQAK. The span at 3321–3343 shows a compositional bias: basic and acidic residues; the sequence is SETKEDRSSATESTKEEPQLDSK. The segment at 3360-3384 adopts a C2H2-type 19; degenerate zinc-finger fold; the sequence is FICRKCQMMFTDEDAAVNHQKSFCY. Residues 3404–3428 form a C2H2-type 20 zinc finger; it reads YQCLACDVAISGNEALSQHLQSSLH. Disordered stretches follow at residues 3449 to 3468 and 3518 to 3543; these read HSVC…AASS and TSGV…QKLE. Low complexity predominate over residues 3453–3468; sequence SPNPNTTSTSQSAASS.

The protein belongs to the krueppel C2H2-type zinc-finger protein family.

It is found in the nucleus. May play a role in neural and muscle differentiation. May be involved in transcriptional regulation. This chain is Zinc finger homeobox protein 4 (ZFHX4), found in Gallus gallus (Chicken).